The following is a 652-amino-acid chain: UvrABC system protein C (652 aa).

The 80-residue stretch at 37–116 (KSSGCYLFKD…IKTNKPYFNI (80 aa)) folds into the GIY-YIG domain. A UVR domain is found at 226–261 (DDLEIFLQKKMLQFSNDLDYENAAKIRDQISGLKLL).

It belongs to the UvrC family. As to quaternary structure, interacts with UvrB in an incision complex.

It localises to the cytoplasm. Functionally, the UvrABC repair system catalyzes the recognition and processing of DNA lesions. UvrC both incises the 5' and 3' sides of the lesion. The N-terminal half is responsible for the 3' incision and the C-terminal half is responsible for the 5' incision. The sequence is that of UvrABC system protein C from Prochlorococcus marinus (strain MIT 9312).